The following is a 740-amino-acid chain: Phosphoribosylformylglycinamidine synthase subunit PurL (740 aa).

Residue H53 is part of the active site. Y56 and K95 together coordinate ATP. E97 is a binding site for Mg(2+). Residues 98–101 (SHNH) and R120 contribute to the substrate site. The Proton acceptor role is filled by H99. D121 provides a ligand contact to Mg(2+). Q244 contributes to the substrate binding site. Residue D272 participates in Mg(2+) binding. 316–318 (ESQ) lines the substrate pocket. ATP-binding residues include D497 and G534. N535 serves as a coordination point for Mg(2+). Substrate is bound at residue S537.

This sequence belongs to the FGAMS family. Monomer. Part of the FGAM synthase complex composed of 1 PurL, 1 PurQ and 2 PurS subunits.

It is found in the cytoplasm. The enzyme catalyses N(2)-formyl-N(1)-(5-phospho-beta-D-ribosyl)glycinamide + L-glutamine + ATP + H2O = 2-formamido-N(1)-(5-O-phospho-beta-D-ribosyl)acetamidine + L-glutamate + ADP + phosphate + H(+). The protein operates within purine metabolism; IMP biosynthesis via de novo pathway; 5-amino-1-(5-phospho-D-ribosyl)imidazole from N(2)-formyl-N(1)-(5-phospho-D-ribosyl)glycinamide: step 1/2. Part of the phosphoribosylformylglycinamidine synthase complex involved in the purines biosynthetic pathway. Catalyzes the ATP-dependent conversion of formylglycinamide ribonucleotide (FGAR) and glutamine to yield formylglycinamidine ribonucleotide (FGAM) and glutamate. The FGAM synthase complex is composed of three subunits. PurQ produces an ammonia molecule by converting glutamine to glutamate. PurL transfers the ammonia molecule to FGAR to form FGAM in an ATP-dependent manner. PurS interacts with PurQ and PurL and is thought to assist in the transfer of the ammonia molecule from PurQ to PurL. The polypeptide is Phosphoribosylformylglycinamidine synthase subunit PurL (Rhodospirillum rubrum (strain ATCC 11170 / ATH 1.1.1 / DSM 467 / LMG 4362 / NCIMB 8255 / S1)).